A 423-amino-acid chain; its full sequence is Carboxypeptidase B2 (423 aa).

Positions 1–22 (MKLCSLAVLVPIVLFCEQHVFA) are cleaved as a signal peptide. Residues 23 to 114 (FQSGQVLAAL…QISNDTVSPR (92 aa)) constitute a propeptide, activation peptide. Residues Asn44, Asn73, and Asn85 are each glycosylated (N-linked (GlcNAc...) asparagine). Residue Asn108 is glycosylated (N-linked (GlcNAc...) (complex) asparagine). The Peptidase M14 domain maps to 122–419 (QYHSLNEIYS…AAVSKIAWHV (298 aa)). Residues Cys178 and Cys191 are joined by a disulfide bond. Zn(2+) is bound by residues His181 and Glu184. Substrate-binding positions include 181 to 184 (HARE) and Arg239. Asn241 carries an N-linked (GlcNAc...) asparagine; partial glycan. Cystine bridges form between Cys250/Cys274 and Cys265/Cys279. A substrate-binding site is contributed by 256 to 257 (NR). Residue His310 coordinates Zn(2+). Substrate contacts are provided by residues 311 to 312 (SY) and Tyr363. Glu385 (proton donor/acceptor) is an active-site residue.

This sequence belongs to the peptidase M14 family. Zn(2+) serves as cofactor. In terms of processing, N-glycosylated. N-glycan at Asn-108: Hex5HexNAc4. Plasma; synthesized in the liver.

It localises to the secreted. It catalyses the reaction Release of C-terminal Arg and Lys from a polypeptide.. TAFI/CPB2 is unique among carboxypeptidases in that it spontaneously inactivates with a short half-life, a property that is crucial for its role in controlling blood clot lysis. The zymogen is stabilized by interactions with the activation peptide. Release of the activation peptide increases a dynamic flap mobility and in time this leads to conformational changes that disrupt the catalytic site and expose a cryptic thrombin-cleavage site present at Arg-324. In terms of biological role, cleaves C-terminal arginine or lysine residues from biologically active peptides such as kinins or anaphylatoxins in the circulation thereby regulating their activities. Down-regulates fibrinolysis by removing C-terminal lysine residues from fibrin that has already been partially degraded by plasmin. This Homo sapiens (Human) protein is Carboxypeptidase B2 (CPB2).